The sequence spans 178 residues: MTQMTPSDVPSMGRRQFMNLLTFGTATGVALGALYPVANYFMPLRAGGGGGGTSAKDELGNPITASGWLSNHPAGDRSLVQGLKGDPTYLIVEGSEAIGNFGINAICTHLGCVVPWNSGANKYICPCHGSQYDANGKVVRGPAPLSLALAHIDVEDDKVFVSQWAETDFRTGEKPWWT.

The chain crosses the membrane as a helical span at residues 20-42; that stretch reads LLTFGTATGVALGALYPVANYFM. In terms of domain architecture, Rieske spans 71–161; that stretch reads NHPAGDRSLV…IDVEDDKVFV (91 aa). Cysteine 107, histidine 109, cysteine 125, and histidine 128 together coordinate [2Fe-2S] cluster. Cysteine 112 and cysteine 127 are joined by a disulfide.

It belongs to the Rieske iron-sulfur protein family. As to quaternary structure, the 4 large subunits of the cytochrome b6-f complex are cytochrome b6, subunit IV (17 kDa polypeptide, PetD), cytochrome f and the Rieske protein, while the 4 small subunits are PetG, PetL, PetM and PetN. The complex functions as a dimer. Requires [2Fe-2S] cluster as cofactor.

Its subcellular location is the cellular thylakoid membrane. It carries out the reaction 2 oxidized [plastocyanin] + a plastoquinol + 2 H(+)(in) = 2 reduced [plastocyanin] + a plastoquinone + 4 H(+)(out). Its function is as follows. Component of the cytochrome b6-f complex, which mediates electron transfer between photosystem II (PSII) and photosystem I (PSI), cyclic electron flow around PSI, and state transitions. The polypeptide is Cytochrome b6-f complex iron-sulfur subunit (Prochlorococcus marinus (strain MIT 9211)).